The primary structure comprises 89 residues: MSLSVEAKAKIVADFGRGTNDSGSSEVQVALLTAQINHLQGHFSEHKKDHHSRRGLLRMVSQRRKLLDYLKRKDVARYTSLIERLGLRR.

It belongs to the universal ribosomal protein uS15 family. As to quaternary structure, part of the 30S ribosomal subunit. Forms a bridge to the 50S subunit in the 70S ribosome, contacting the 23S rRNA.

One of the primary rRNA binding proteins, it binds directly to 16S rRNA where it helps nucleate assembly of the platform of the 30S subunit by binding and bridging several RNA helices of the 16S rRNA. In terms of biological role, forms an intersubunit bridge (bridge B4) with the 23S rRNA of the 50S subunit in the ribosome. This Serratia proteamaculans (strain 568) protein is Small ribosomal subunit protein uS15.